Consider the following 505-residue polypeptide: E3 SUMO-protein ligase PIAS4-A (505 aa).

The SAP domain maps to 12-46; that stretch reads VKSFRVSDLQTLLASMGRSKSGLKQDLVGRALRLV. Residues 20-24 carry the LXXLL motif motif; that stretch reads LQTLL. A Glycyl lysine isopeptide (Lys-Gly) (interchain with G-Cter in SUMO); alternate cross-link involves residue K35. A Glycyl lysine isopeptide (Lys-Gly) (interchain with G-Cter in SUMO2); alternate cross-link involves residue K35. Glycyl lysine isopeptide (Lys-Gly) (interchain with G-Cter in SUMO2) cross-links involve residues K56 and K68. In terms of domain architecture, PINIT spans 104–264; the sequence is GIPKPAPPPA…SVAVYLVRVF (161 aa). The SP-RING-type zinc finger occupies 296–381; the sequence is PESEIATTGL…LKETPEDVEE (86 aa). Zn(2+)-binding residues include C327, H329, C350, and C353. The required for nuclear localization stretch occupies residues 374–505; the sequence is ETPEDVEEIE…DYDKDLVTAY (132 aa). The span at 395-407 shows a compositional bias: basic and acidic residues; sequence DDKEKERERENSR. A disordered region spans residues 395-505; the sequence is DDKEKERERE…DYDKDLVTAY (111 aa). Residues 437-457 are compositionally biased toward gly residues; the sequence is SGSGGASAGTGSTSGGSGGGT. Over residues 462-485 the composition is skewed to acidic residues; that stretch reads TLDDSSEEEGGGGAEDSEETDDSQ. Residues 493-505 are compositionally biased toward basic and acidic residues; it reads GRYDYDKDLVTAY.

Belongs to the PIAS family. In terms of processing, sumoylated. Lys-35 is the main site of sumoylation. Highly expressed in spleen, liver, and brain. Expressed at lower levels in heart, intestine, kidney, gill, skin, and muscle.

The protein resides in the nucleus. It catalyses the reaction S-ubiquitinyl-[E2 ubiquitin-conjugating enzyme]-L-cysteine + [acceptor protein]-L-lysine = [E2 ubiquitin-conjugating enzyme]-L-cysteine + N(6)-ubiquitinyl-[acceptor protein]-L-lysine.. It functions in the pathway protein modification; protein sumoylation. Functions as an E3-type small ubiquitin-like modifier (SUMO) ligase. May play a role as a transcriptional coregulator in various cellular pathways. Catalyzes conjugation of SUMO2 to KAT5 in response to DNA damage, facilitating repair of DNA double-strand breaks (DSBs) via homologous recombination (HR). Mediates sumoylation of PARP1 in response to PARP1 trapping to chromatin. Negatively regulates induction of interferon phi 1 (ifnphi1) mediated by mavs and ticam1/trif. Also inhibits ifnphi1-mediated activation of the interferon-stimulated genes (ISGs) pkz and cd40, and to a lesser extent rsad2 and isg15. May inhibit ticam1/trif-mediated activation of NF-kappa-B. The chain is E3 SUMO-protein ligase PIAS4-A from Danio rerio (Zebrafish).